Consider the following 259-residue polypeptide: Tryptophan synthase alpha chain (259 aa).

Active-site proton acceptor residues include E35 and D46.

This sequence belongs to the TrpA family. In terms of assembly, tetramer of two alpha and two beta chains.

The enzyme catalyses (1S,2R)-1-C-(indol-3-yl)glycerol 3-phosphate + L-serine = D-glyceraldehyde 3-phosphate + L-tryptophan + H2O. Its pathway is amino-acid biosynthesis; L-tryptophan biosynthesis; L-tryptophan from chorismate: step 5/5. Functionally, the alpha subunit is responsible for the aldol cleavage of indoleglycerol phosphate to indole and glyceraldehyde 3-phosphate. The polypeptide is Tryptophan synthase alpha chain (Methanococcus vannielii (strain ATCC 35089 / DSM 1224 / JCM 13029 / OCM 148 / SB)).